Reading from the N-terminus, the 717-residue chain is MPTPCLEQFLHHLEKSHLYLSIDNTKQAKKECLESIKILNSIAKTTPLPEIKVLSQYTLNHYESLDKPRTISDKLEWISSKLTQETFFPPVIQFNENFTSHNELFVDTISPIQDNDNKIFEKLPNKLAKFEYIEISNWDNDITHLKNLYQDILPNCSFVSSFLAIIDANIPIIDTITPQKSSQKYKVSLRFNGALRNVIVDSKFPIMPNSRNLIIKSYSDTELYWPALIEKAYLTIMGNGYNFSGSNMANDAYVLSGWLPQIIKLSNGQLPSNIDDLWRLRTQGKVTMGIGTGTLSKQLSSQLHLVSGHDYVIDNIKDGVITVKNPWLDPKDRVVEIKNFNHFKYLYVNWKPDHKPYQHYFLYQAKPNTYNQPQFTIKCMEETWILLERHLSETSSSPSPHWMDMNVFETEYKIITPSQYKKYLSVETNNRLQLIKLKPGVFTIVISSNKPCRFTLSSFNAMFSKSKYKYDYTETVNGEWNSDINGGNWAMSTYINNPQYDIIAKQTTELIMGMHGQGQINFHLFHSSSDSMGERIQNFDKTKLINYQNYNASYQSSSYRLTPGHYKLVVSEYYRSIGTYQLVLNSSEPITITKIPPFLGLYNISKSFNWDNTNRFKLKFETTGYNSKVKIKIAYFNGESDFELQTSYRPAMRASLFNSQTKQPIQINEQFNDSLYGVFLHEILPSPEEYILLIERFEIGYGRCVVEIGCNNKVILK.

In terms of domain architecture, Calpain catalytic spans 85-352 (ETFFPPVIQF…FKYLYVNWKP (268 aa)). Active-site residues include cysteine 156, histidine 309, and asparagine 325.

The protein belongs to the peptidase C2 family. PalB/RIM13 subfamily.

In terms of biological role, required for the proteolytic cleavage of the transcription factor RIM101 in response to alkaline ambient pH. The protein is Calpain-like protease palB/RIM13 (RIM13) of Candida albicans (strain SC5314 / ATCC MYA-2876) (Yeast).